A 613-amino-acid chain; its full sequence is DNA mismatch repair protein MutL (613 aa).

The protein belongs to the DNA mismatch repair MutL/HexB family.

This protein is involved in the repair of mismatches in DNA. It is required for dam-dependent methyl-directed DNA mismatch repair. May act as a 'molecular matchmaker', a protein that promotes the formation of a stable complex between two or more DNA-binding proteins in an ATP-dependent manner without itself being part of a final effector complex. This Janthinobacterium sp. (strain Marseille) (Minibacterium massiliensis) protein is DNA mismatch repair protein MutL.